The sequence spans 194 residues: Imidazoleglycerol-phosphate dehydratase (194 aa).

The protein belongs to the imidazoleglycerol-phosphate dehydratase family.

The protein resides in the cytoplasm. The enzyme catalyses D-erythro-1-(imidazol-4-yl)glycerol 3-phosphate = 3-(imidazol-4-yl)-2-oxopropyl phosphate + H2O. The protein operates within amino-acid biosynthesis; L-histidine biosynthesis; L-histidine from 5-phospho-alpha-D-ribose 1-diphosphate: step 6/9. In Bacillus cereus (strain AH820), this protein is Imidazoleglycerol-phosphate dehydratase.